A 349-amino-acid chain; its full sequence is UPF0283 membrane protein Ent638_2153 (349 aa).

Helical transmembrane passes span 70–90, 99–119, and 213–233; these read MVTA…VQWT, WVAL…VGSV, and ESTL…FIAW.

This sequence belongs to the UPF0283 family.

It localises to the cell inner membrane. The sequence is that of UPF0283 membrane protein Ent638_2153 from Enterobacter sp. (strain 638).